Consider the following 508-residue polypeptide: UBX domain-containing protein 4 (508 aa).

An interaction with UBQLN1 region spans residues 1–200 (MLWFQGAIPA…PAEDLNIRVE (200 aa)). At 1 to 413 (MLWFQGAIPA…VHSSSGDIWT (413 aa)) the chain is on the cytoplasmic side. Composition is skewed to polar residues over residues 117-151 (SETSVANGSQSESSVSTPSASFEPNNTCENSQSRN) and 160-187 (TSDTKSDTATGGESAGHATSSQEPSGCS). Residues 117-196 (SETSVANGSQ…SDQRPAEDLN (80 aa)) are disordered. Residues 315–393 (ERSTVARIQF…ELAPSASVVV (79 aa)) form the UBX domain. Residues 414–434 (LLGTVLYPFLAIWRLISNFLF) lie within the membrane without spanning it. Over 435–508 (SNPPPTQTSV…TWNGNSTQQM (74 aa)) the chain is Cytoplasmic. Residues 440–508 (TQTSVRVTSS…TWNGNSTQQM (69 aa)) form a disordered region. Residues 441–458 (QTSVRVTSSEPPNPASSS) show a composition bias toward polar residues. Over residues 459-491 (KSEKREPVRKRVLEKRGDDFKKEGKIYRLRTQD) the composition is skewed to basic and acidic residues. Thr489 carries the post-translational modification Phosphothreonine. Residues 498–508 (NTWNGNSTQQM) are compositionally biased toward polar residues.

Directly interacts with VCP. Interacts with UBQLN1. Forms a complex with VCP and UBQLN1.

The protein localises to the endoplasmic reticulum membrane. Its subcellular location is the nucleus envelope. Functionally, involved in endoplasmic reticulum-associated protein degradation (ERAD). Acts as a platform to recruit both UBQLN1 and VCP to the ER during ERAD. This is UBX domain-containing protein 4 (UBXN4) from Pongo abelii (Sumatran orangutan).